The sequence spans 452 residues: Ribosomal protein uS12 methylthiotransferase RimO (452 aa).

The MTTase N-terminal domain maps to 3–118 (GKIGFVSLGC…VMQAIHLHLP (116 aa)). [4Fe-4S] cluster contacts are provided by Cys-12, Cys-48, Cys-77, Cys-149, Cys-153, and Cys-156. The region spanning 135 to 381 (LTPKHYAYLK…MAKAEDISIK (247 aa)) is the Radical SAM core domain. The region spanning 384–452 (AKKIGKRVQV…SQGHDLIAET (69 aa)) is the TRAM domain.

The protein belongs to the methylthiotransferase family. RimO subfamily. [4Fe-4S] cluster serves as cofactor.

It is found in the cytoplasm. The catalysed reaction is L-aspartate(89)-[ribosomal protein uS12]-hydrogen + (sulfur carrier)-SH + AH2 + 2 S-adenosyl-L-methionine = 3-methylsulfanyl-L-aspartate(89)-[ribosomal protein uS12]-hydrogen + (sulfur carrier)-H + 5'-deoxyadenosine + L-methionine + A + S-adenosyl-L-homocysteine + 2 H(+). Its function is as follows. Catalyzes the methylthiolation of an aspartic acid residue of ribosomal protein uS12. The protein is Ribosomal protein uS12 methylthiotransferase RimO of Polynucleobacter asymbioticus (strain DSM 18221 / CIP 109841 / QLW-P1DMWA-1) (Polynucleobacter necessarius subsp. asymbioticus).